The chain runs to 357 residues: Mitochondrial carrier protein LEU5 (357 aa).

The next 6 helical transmembrane spans lie at 31–47, 103–119, 136–153, 208–228, 269–285, and 325–347; these read DYIV…GSCA, LRIF…YEQI, LVSG…TYPL, VPTV…HDLL, ISGG…AYPF, and GFFV…SFFV. 3 Solcar repeats span residues 31 to 122, 130 to 231, and 262 to 354; these read DYIV…IRNT, ESHW…LHDV, and LRTW…MKWN.

The protein belongs to the mitochondrial carrier (TC 2.A.29) family.

It is found in the mitochondrion inner membrane. Its function is as follows. Required for the accumulation of coenzyme A in the mitochondrial matrix. In Saccharomyces cerevisiae (strain ATCC 204508 / S288c) (Baker's yeast), this protein is Mitochondrial carrier protein LEU5 (LEU5).